Here is a 358-residue protein sequence, read N- to C-terminus: UDP-N-acetylglucosamine--N-acetylmuramyl-(pentapeptide) pyrophosphoryl-undecaprenol N-acetylglucosamine transferase (358 aa).

UDP-N-acetyl-alpha-D-glucosamine contacts are provided by residues threonine 13 to glycine 15, asparagine 125, arginine 162, serine 190, isoleucine 244, alanine 263 to glutamate 268, and glutamine 289.

It belongs to the glycosyltransferase 28 family. MurG subfamily.

The protein localises to the cell inner membrane. The catalysed reaction is di-trans,octa-cis-undecaprenyl diphospho-N-acetyl-alpha-D-muramoyl-L-alanyl-D-glutamyl-meso-2,6-diaminopimeloyl-D-alanyl-D-alanine + UDP-N-acetyl-alpha-D-glucosamine = di-trans,octa-cis-undecaprenyl diphospho-[N-acetyl-alpha-D-glucosaminyl-(1-&gt;4)]-N-acetyl-alpha-D-muramoyl-L-alanyl-D-glutamyl-meso-2,6-diaminopimeloyl-D-alanyl-D-alanine + UDP + H(+). The protein operates within cell wall biogenesis; peptidoglycan biosynthesis. Functionally, cell wall formation. Catalyzes the transfer of a GlcNAc subunit on undecaprenyl-pyrophosphoryl-MurNAc-pentapeptide (lipid intermediate I) to form undecaprenyl-pyrophosphoryl-MurNAc-(pentapeptide)GlcNAc (lipid intermediate II). In Halorhodospira halophila (strain DSM 244 / SL1) (Ectothiorhodospira halophila (strain DSM 244 / SL1)), this protein is UDP-N-acetylglucosamine--N-acetylmuramyl-(pentapeptide) pyrophosphoryl-undecaprenol N-acetylglucosamine transferase.